We begin with the raw amino-acid sequence, 218 residues long: Small ribosomal subunit protein uS3c (218 aa).

The KH type-2 domain maps to 47–118 (VQKNMRTSSG…KLNIAVTRIA (72 aa)).

The protein belongs to the universal ribosomal protein uS3 family. Part of the 30S ribosomal subunit.

The protein resides in the plastid. It localises to the chloroplast. This Solanum lycopersicum (Tomato) protein is Small ribosomal subunit protein uS3c (rps3).